A 443-amino-acid polypeptide reads, in one-letter code: Mevalonate kinase (443 aa).

Residues Lys-12, Ser-138, and 143–149 (GAGLGSS) contribute to the ATP site. Residues Ser-149 and Glu-191 each coordinate Mg(2+). The Proton acceptor role is filled by Asp-202.

The protein belongs to the GHMP kinase family. Mevalonate kinase subfamily. Homodimer. Mg(2+) serves as cofactor.

Its subcellular location is the cytoplasm. The protein resides in the cytosol. It catalyses the reaction (R)-mevalonate + ATP = (R)-5-phosphomevalonate + ADP + H(+). It participates in isoprenoid biosynthesis; isopentenyl diphosphate biosynthesis via mevalonate pathway; isopentenyl diphosphate from (R)-mevalonate: step 1/3. Farnesyl pyrophosphate and geranyl pyrophosphate inhibit mevalonate kinase by binding competitively at the ATP-binding site. Mevalonate kinase; part of the second module of ergosterol biosynthesis pathway that includes the middle steps of the pathway. ERG12 converts mevalonate into 5-phosphomevalonate. The second module is carried out in the vacuole and involves the formation of farnesyl diphosphate, which is also an important intermediate in the biosynthesis of ubiquinone, dolichol, heme and prenylated proteins. Activity by the mevalonate kinase ERG12 first converts mevalonate into 5-phosphomevalonate. 5-phosphomevalonate is then further converted to 5-diphosphomevalonate by the phosphomevalonate kinase ERG8. The diphosphomevalonate decarboxylase MVD1/ERG19 then produces isopentenyl diphosphate. The isopentenyl-diphosphate delta-isomerase IDI1 then catalyzes the 1,3-allylic rearrangement of the homoallylic substrate isopentenyl (IPP) to its highly electrophilic allylic isomer, dimethylallyl diphosphate (DMAPP). Finally the farnesyl diphosphate synthase ERG20 catalyzes the sequential condensation of isopentenyl pyrophosphate with dimethylallyl pyrophosphate, and then with the resultant geranylpyrophosphate to the ultimate product farnesyl pyrophosphate. The polypeptide is Mevalonate kinase (Saccharomyces cerevisiae (strain ATCC 204508 / S288c) (Baker's yeast)).